Consider the following 4243-residue polypeptide: Fibrocystin-L (4243 aa).

The first 20 residues, 1 to 20 (MGHLWLLGIWGLCGLLLCAA), serve as a signal peptide directing secretion. Topologically, residues 21-4210 (DPSTDGSQII…KASTVGTYAQ (4190 aa)) are extracellular. IPT/TIG domains lie at 31–129 (PKVT…TCKG), 146–255 (PTIR…KMAY), and 270–361 (AEVT…ILEY). T122 carries an O-linked (GalNAc...) threonine glycan. The PA14 domain maps to 337–492 (PGGRGLKLEV…NVYTEQQTGD (156 aa)). T445 carries an O-linked (GalNAc...) threonine glycan. 11 IPT/TIG domains span residues 1067 to 1151 (PLVL…EFYF), 1155 to 1234 (SQIS…AFSY), 1240 to 1322 (PIIT…RDKL), 1330 to 1469 (LEVT…SFSY), 1566 to 1649 (PSIS…TLSN), 1659 to 1743 (PNID…TFSY), 1749 to 1828 (PYIT…NLTV), 1831 to 1910 (PPVA…LFTY), 1916 to 1997 (PFLR…VFEY), 1999 to 2085 (LNIQ…PFTY), and 2091 to 2176 (PLIT…DFLY). Residues T1803 and T1839 are each glycosylated (O-linked (GalNAc...) threonine). In terms of domain architecture, G8 1 spans 2184–2304 (FSWGGKSPPE…VPVTWTRLAH (121 aa)). T2320 is a glycosylation site (O-linked (GalNAc...) threonine). PbH1 repeat units lie at residues 2508-2530 (THHL…FIED), 2566-2588 (NPNN…WYRM), 2665-2687 (GGAL…ETKR), and 2733-2756 (SEGL…ALGV). The G8 2 domain occupies 3036 to 3174 (SFWQSSRENN…HSIYKTKLSE (139 aa)). PbH1 repeat units follow at residues 3293 to 3315 (KGNA…RDST), 3355 to 3377 (TDGL…RIWG), 3416 to 3438 (GTNT…RIDG), 3471 to 3493 (PGCS…YFQT), and 3527 to 3548 (SKNV…NCSD). O-linked (GalNAc...) threonine glycosylation occurs at T3736. A helical membrane pass occupies residues 4211–4231 (IMTVVISCLVGRMWLLEIFMA). Residues 4232-4243 (AVSTLNITLRSY) are Cytoplasmic-facing.

It localises to the membrane. It is found in the cell projection. The protein resides in the stereocilium membrane. Its function is as follows. Component of hair-cell stereocilia coat. Required for normal hearing. The polypeptide is Fibrocystin-L (PKHD1L1) (Homo sapiens (Human)).